A 933-amino-acid chain; its full sequence is Valine--tRNA ligase (933 aa).

Positions 58–68 match the 'HIGH' region motif; sequence PNVTGSLHMGH. Residues 556 to 560 carry the 'KMSKS' region motif; it reads KMSKS. K559 contributes to the ATP binding site. Coiled coils occupy residues 807-833 and 864-933; these read VTKN…ANKV and EGLV…LGLK.

Belongs to the class-I aminoacyl-tRNA synthetase family. ValS type 1 subfamily. As to quaternary structure, monomer.

Its subcellular location is the cytoplasm. It carries out the reaction tRNA(Val) + L-valine + ATP = L-valyl-tRNA(Val) + AMP + diphosphate. Its function is as follows. Catalyzes the attachment of valine to tRNA(Val). As ValRS can inadvertently accommodate and process structurally similar amino acids such as threonine, to avoid such errors, it has a 'posttransfer' editing activity that hydrolyzes mischarged Thr-tRNA(Val) in a tRNA-dependent manner. In Prochlorococcus marinus (strain SARG / CCMP1375 / SS120), this protein is Valine--tRNA ligase.